We begin with the raw amino-acid sequence, 51 residues long: Zinc metalloproteinase-disintegrin-like crovidisin (51 aa).

Residues 1–12 (AMVTKNNGDLDK) form the Peptidase M12B domain. In terms of domain architecture, Disintegrin spans 13–18 (SGTECR). N29 carries N-linked (GlcNAc...) asparagine glycosylation.

Belongs to the venom metalloproteinase (M12B) family. P-III subfamily. P-IIIa sub-subfamily. As to quaternary structure, monomer. Zn(2+) is required as a cofactor. As to expression, expressed by the venom gland.

Its subcellular location is the secreted. In terms of biological role, snake venom zinc metalloproteinase-disintegrin-like that blocks the interaction between platelets and collagen fibers through its binding to collagen fibers, resulting in the blockade of collagen-mediated platelet functions such as adhesion, release reaction, thromboxane formation, and aggregation. Binds selectively to collagen type I with high affinity. Also exerts proteolytic activity to matrix. This is Zinc metalloproteinase-disintegrin-like crovidisin from Crotalus viridis viridis (Prairie rattlesnake).